The following is a 979-amino-acid chain: Receptor-type tyrosine-protein phosphatase-like N (979 aa).

The first 34 residues, 1-34 (MRLPGRPGGPGGSGGLRVLLCLLLLGSRPGGCNA), serve as a signal peptide directing secretion. An RESP18 homology domain region spans residues 35–131 (ISAHGCLFDR…HPRDRSGLVP (97 aa)). Topologically, residues 35–575 (ISAHGCLFDR…RPAHSTSPMR (541 aa)) are lumenal. Cys53 and Cys62 are disulfide-bonded. A compositionally biased stretch (basic and acidic residues) spans 113–127 (IPRLRPPEPHPRDRS). Disordered stretches follow at residues 113-171 (IPRL…GAGS), 248-272 (GSKG…PAQL), 285-332 (SQVP…EQPD), and 391-466 (EQVQ…STRP). Phosphoserine occurs at positions 308 and 309. Over residues 400 to 409 (EPPPPMPSLP) the composition is skewed to pro residues. Residues 449-575 (SPLGQNQPTM…RPAHSTSPMR (127 aa)) form a sufficient for dimerization of proICA512 region. A compositionally biased stretch (polar residues) spans 451–466 (LGQNQPTMAGQPSTRP). N-linked (GlcNAc...) asparagine glycans are attached at residues Asn506 and Asn524. The helical transmembrane segment at 576 to 600 (SVLLTLVALAGVAGLLVALAVALCV) threads the bilayer. The sufficient for dimerization of proICA512 stretch occupies residues 601 to 732 (RQHARQRDKE…PNTCATAQGE (132 aa)). Over 601–979 (RQHARQRDKE…VNAILKALPQ (379 aa)) the chain is Cytoplasmic. The disordered stretch occupies residues 643–680 (NRAEGPPEPSRVSSVSSQFSDAAQASPSSHSSTPSWCE). Positions 652–677 (SRVSSVSSQFSDAAQASPSSHSSTPS) are enriched in low complexity. Positions 709–969 (LAKEWQALCA…EFALTAVAEE (261 aa)) constitute a Tyrosine-protein phosphatase domain. A Glycyl lysine isopeptide (Lys-Gly) (interchain with G-Cter in SUMO) cross-link involves residue Lys754.

It belongs to the protein-tyrosine phosphatase family. Receptor class 8 subfamily. Homodimer; shown for the unprocessed protein (proICA512) in the endoplasmic reticulum and resolved during protein maturation as ICA512-TMF seems to be predominantly monomeric in secretory granules; however, ICA512-CCF interacts with ICA512-TMF disrupting the ICA512-TMF:SNTB2 complex. The isolated lumenal RESP18 homology domain has been shown to form disulfide-linked homooligomers. Interacts (via cytoplasmic domain) with phosphorylated SNTB2; this protects PTPRN against cleavage by CAPN1 to produce ICA512-CCF. Dephosphorylation of SNTB2 upon insulin stimulation disrupts the interaction and results in PTPRN cleavage. Interacts with SNX19. ICA512-CCF interacts with PIAS4; in the nucleus. Interacts with STAT5B (phosphorylated); down-regulated by ICA512-CCF sumoylation; ICA512-CCF prevents STAT5B dephosphorylation; ICA512-CCF mediates interaction of STAT5B with PIAS4. Interacts (via RESP18 homology domain) with insulin and proinsulin. Interacts with PTPRN2, PTPRA and PTPRE. In terms of processing, N-glycosylated. Post-translationally, O-glycosylated. Subject to proteolytic cleavage at multiple sites. Subject to cleavage on a pair of basic residues. On exocytosis of secretory granules in pancreatic beta-cells ICA512-TMF is transiently inserted in the plasma-membrane and cleaved by mu-type calpain CPN1 to yield ICA512-CCF. In terms of processing, sumoylated at two sites including Lys-754. Sumoylation decreases interaction with STAT5. In terms of tissue distribution, detected in pituitary (at protein level).

The protein localises to the membrane. The protein resides in the cytoplasmic vesicle. It is found in the secretory vesicle membrane. It localises to the perikaryon. Its subcellular location is the cell projection. The protein localises to the axon. The protein resides in the synapse. It is found in the cell membrane. It localises to the endosome. Its subcellular location is the nucleus. Its function is as follows. Plays a role in vesicle-mediated secretory processes. Required for normal accumulation of secretory vesicles in hippocampus, pituitary and pancreatic islets. Required for the accumulation of normal levels of insulin-containing vesicles and preventing their degradation. Plays a role in insulin secretion in response to glucose stimuli. Required for normal accumulation of the neurotransmitters norepinephrine, dopamine and serotonin in the brain. In females, but not in males, required for normal accumulation and secretion of pituitary hormones, such as luteinizing hormone (LH) and follicle-stimulating hormone (FSH). Required to maintain normal levels of renin expression and renin release. Seems to lack intrinsic enzyme activity. May regulate catalytic active protein-tyrosine phosphatases such as PTPRA through dimerization. Functionally, ICA512-TMF regulates dynamics and exocytosis of insulin secretory granules (SGs); binding of ICA512-TMF to SNTB2/beta-2-syntrophin is proposed to restrain SGs mobility and exocytosis by tethering them to the actin cytoskeleton depending on UTRN; the function is inhibited by cytoplasmic ICA512-CFF dimerizing with ICA512-TMF and displacing SNTB2. ICA512-CCF translocated to the nucleus promotes expression of insulin and other granule-related genes; the function implicates binding to and regulating activity of STAT5B probably by preventing its dephosphorylation and potentially by inducing its sumoylation by recruiting PIAS4. Enhances pancreatic beta-cell proliferation by converging with signaling by STAT5B and STAT3. ICA512-CCF located in the cytoplasm regulates dynamics and exocytosis of insulin secretory granules (SGs) by dimerizing with ICA512-TMF and displacing SNTB2 thus enhancing SGs mobility and exocytosis. This Bos taurus (Bovine) protein is Receptor-type tyrosine-protein phosphatase-like N (PTPRN).